A 369-amino-acid chain; its full sequence is Ferredoxin--NADP reductase 2 (369 aa).

A disordered region spans residues 1–21 (MDLSIPNPVADATRQVEGGSP). Positions 58, 66, 71, 111, 146, 311, and 352 each coordinate FAD.

The protein belongs to the ferredoxin--NADP reductase type 2 family. As to quaternary structure, homodimer. It depends on FAD as a cofactor.

It catalyses the reaction 2 reduced [2Fe-2S]-[ferredoxin] + NADP(+) + H(+) = 2 oxidized [2Fe-2S]-[ferredoxin] + NADPH. This is Ferredoxin--NADP reductase 2 from Cupriavidus taiwanensis (strain DSM 17343 / BCRC 17206 / CCUG 44338 / CIP 107171 / LMG 19424 / R1) (Ralstonia taiwanensis (strain LMG 19424)).